The primary structure comprises 1098 residues: Gramicidin S synthase 1 (1098 aa).

A Carrier domain is found at 538 to 612 (APRNEIEETL…QLVHYIKDSK (75 aa)). S573 carries the O-(pantetheine 4'-phosphoryl)serine modification.

The protein belongs to the ATP-dependent AMP-binding enzyme family. In terms of assembly, large multienzyme complex of GrsA and GrsB. Requires pantetheine 4'-phosphate as cofactor.

The enzyme catalyses L-phenylalanine + ATP + H2O = D-phenylalanine + AMP + diphosphate + H(+). It functions in the pathway antibiotic biosynthesis; gramicidin S biosynthesis. In terms of biological role, in the first step of peptide synthesis this enzyme activates phenylalanine and racemizes it to the D-isomer. The protein is Gramicidin S synthase 1 (grsA) of Brevibacillus brevis (Bacillus brevis).